The following is a 214-amino-acid chain: Cytochrome c biogenesis ATP-binding export protein CcmA (214 aa).

One can recognise an ABC transporter domain in the interval 16–212; it reads LRVSGLSLSR…PDAKRIDLGA (197 aa). 48–55 serves as a coordination point for ATP; that stretch reads GPNGTGKT.

The protein belongs to the ABC transporter superfamily. CcmA exporter (TC 3.A.1.107) family. The complex is composed of two ATP-binding proteins (CcmA) and two transmembrane proteins (CcmB).

It localises to the cell inner membrane. It carries out the reaction heme b(in) + ATP + H2O = heme b(out) + ADP + phosphate + H(+). Its function is as follows. Part of the ABC transporter complex CcmAB involved in the biogenesis of c-type cytochromes; once thought to export heme, this seems not to be the case, but its exact role is uncertain. Responsible for energy coupling to the transport system. The chain is Cytochrome c biogenesis ATP-binding export protein CcmA from Maricaulis maris (strain MCS10) (Caulobacter maris).